The chain runs to 117 residues: MKWTILNTLICPQSGIAFSAISSLRFLKFIMWYEADVILLPGESMKLYSSRVLINDQYHSLKIYNITVYDEAQWEKLRERPSCPYQAGGKQSDSCFFQSFCAIKRCPNNIPRGEPWR.

The protein belongs to the IraM/RssC family.

The protein localises to the cytoplasm. Functionally, involved in the stabilization of the sigma stress factor RpoS. The protein is Anti-adapter protein IraM of Klebsiella pneumoniae (strain 342).